Consider the following 371-residue polypeptide: GDP-perosamine synthase (371 aa).

Lysine 186 is subject to N6-(pyridoxal phosphate)lysine.

The protein belongs to the DegT/DnrJ/EryC1 family. In terms of assembly, homodimer. The cofactor is pyridoxal 5'-phosphate.

The catalysed reaction is GDP-alpha-D-perosamine + 2-oxoglutarate = GDP-4-dehydro-alpha-D-rhamnose + L-glutamate. The protein operates within bacterial outer membrane biogenesis; LPS O-antigen biosynthesis. Its function is as follows. Catalyzes the synthesis of GDP-perosamine from GDP-4-keto-6-deoxy-D-mannose and L-glutamate. Can use only L-glutamate as amino donor. In vitro, can also use GDP-4-keto-3,6-dideoxymannose to produce GDP-3-deoxyperosamine. Involved in the formation of S-LPS, which is required for attachment of the protein S-layer to the outer membrane surface. This chain is GDP-perosamine synthase, found in Caulobacter vibrioides (strain ATCC 19089 / CIP 103742 / CB 15) (Caulobacter crescentus).